A 394-amino-acid polypeptide reads, in one-letter code: Trans-enoyl reductase fumoC (394 aa).

V62–K65 is an NADP(+) binding site. A152–M159 contributes to the substrate binding site. Residues S224–S227, Y242, and L289–D290 contribute to the NADP(+) site. T309–F313 is a binding site for substrate. An NADP(+)-binding site is contributed by V378 to K379.

The protein belongs to the zinc-containing alcohol dehydrogenase family. In terms of assembly, monomer.

The protein operates within secondary metabolite biosynthesis. Trans-enoyl reductase; part of the gene cluster that mediates the biosynthesis of fumosorinone, a 2-pyridone alkaloid that acts as an inhibitor of protein tyrosine phosphatase 1B which is implicated asa negative regulator of insulin receptor signaling and a potential drug target for the treatment of type II diabetes and other associated metabolic syndromes. The polyketide-amino acid backbone of fumosorinone is first assembled by the PKS-NRPS hybrid fumoS. The PKS modules condense one acetyl-CoA starter unit with 7 malonyl-CoA units, programmed C-methylations occurring after the first 3 and the sixth extensions, and cycles of full reduction occurring after the first 2 extensions. Because fumoS lacks a designated enoyl reductase (ER) domain, the required activity is provided the enoyl reductase fumoC. Upon formation of the polyketide backbone on the thiotemplate, the polyketide is transferred to the NRPS module and linked to tyrosine to produce the acyltetramic acid intermediate called prefumosorinone A. The cytochrome P450 monooxygenase fumoA then probably catalyzes an unprecedented oxidative ring expansion of prefumosorinone A to form prefumosorinone B which contains the 2-pyridone core of fumosorinone. The cytochrome P450 monooxygenase fumoB might hydroxylate the nitrogen of prefumosorinone B, but not the acyltetramic acid prefumosorinone A, to form fumosorinone. In Cordyceps fumosorosea (strain ARSEF 2679) (Isaria fumosorosea), this protein is Trans-enoyl reductase fumoC.